A 122-amino-acid polypeptide reads, in one-letter code: Ribosome-binding factor A (122 aa).

The protein belongs to the RbfA family. In terms of assembly, monomer. Binds 30S ribosomal subunits, but not 50S ribosomal subunits or 70S ribosomes.

The protein localises to the cytoplasm. One of several proteins that assist in the late maturation steps of the functional core of the 30S ribosomal subunit. Associates with free 30S ribosomal subunits (but not with 30S subunits that are part of 70S ribosomes or polysomes). Required for efficient processing of 16S rRNA. May interact with the 5'-terminal helix region of 16S rRNA. The polypeptide is Ribosome-binding factor A (Pelagibacter ubique (strain HTCC1062)).